The chain runs to 224 residues: UPF0758 protein lmo1549 (224 aa).

Residues 102–224 enclose the MPN domain; sequence VVRCPEDAVK…YISLKEKGYF (123 aa). 3 residues coordinate Zn(2+): His-173, His-175, and Asp-186. A JAMM motif motif is present at residues 173–186; it reads HNHPSGDPTPSSED.

It belongs to the UPF0758 family.

The protein is UPF0758 protein lmo1549 of Listeria monocytogenes serovar 1/2a (strain ATCC BAA-679 / EGD-e).